A 96-amino-acid chain; its full sequence is Large ribosomal subunit protein bL21 (96 aa).

The span at 73 to 84 (KRRKRYQSRNGH) shows a compositional bias: basic residues. A disordered region spans residues 73–96 (KRRKRYQSRNGHRQQMTQIEVVSL). The segment covering 85–96 (RQQMTQIEVVSL) has biased composition (polar residues).

Belongs to the bacterial ribosomal protein bL21 family. In terms of assembly, part of the 50S ribosomal subunit. Contacts protein L20.

In terms of biological role, this protein binds to 23S rRNA in the presence of protein L20. The chain is Large ribosomal subunit protein bL21 from Chlorobium phaeovibrioides (strain DSM 265 / 1930) (Prosthecochloris vibrioformis (strain DSM 265)).